An 82-amino-acid polypeptide reads, in one-letter code: Large ribosomal subunit protein bL31B (82 aa).

The protein belongs to the bacterial ribosomal protein bL31 family. Type B subfamily. Part of the 50S ribosomal subunit.

The protein is Large ribosomal subunit protein bL31B of Amoebophilus asiaticus (strain 5a2).